Reading from the N-terminus, the 387-residue chain is Diphthine methyltransferase (387 aa).

5 WD repeats span residues asparagine 62–phenylalanine 102, glutamate 119–threonine 159, proline 195–serine 237, isoleucine 241–phenylalanine 286, and glycine 357–valine 387.

It belongs to the DPH7 family. Interacts with CAN1 and RTT10.

Its subcellular location is the cytoplasm. It localises to the endosome. It catalyses the reaction diphthine methyl ester-[translation elongation factor 2] + H2O = diphthine-[translation elongation factor 2] + methanol + H(+). Its pathway is protein modification; peptidyl-diphthamide biosynthesis. Its function is as follows. Catalyzes the demethylation of diphthine methyl ester to form diphthine, an intermediate in diphthamide biosynthesis, a post-translational modification of histidine which occurs in translation elongation factor 2 (EFT1 and EFT2). Also plays a role in the regulation of the retromer complex and is required for the recycling from endosomes of plasma membrane proteins like CAN1 and MUP1. Identified in a screen for mutants with decreased levels of rDNA transcription. The protein is Diphthine methyltransferase (RRT2) of Saccharomyces cerevisiae (strain ATCC 204508 / S288c) (Baker's yeast).